A 261-amino-acid polypeptide reads, in one-letter code: (3R)-3-hydroxyacyl-CoA dehydrogenase (261 aa).

NAD(+)-binding positions include 15 to 23 and 42 to 43; these read LVTGAGSGI and DL. Phosphoserine is present on serine 60. 74-76 serves as a coordination point for NAD(+); sequence ADV. Serine 156 provides a ligand contact to substrate. N6-succinyllysine is present on lysine 160. The active-site Proton acceptor is tyrosine 169. NAD(+)-binding positions include 169 to 173 and 202 to 204; these read YAASK and IAT. Position 173 is an N6-succinyllysine (lysine 173).

The protein belongs to the short-chain dehydrogenases/reductases (SDR) family. As to quaternary structure, heterotetramer with CBR4; contains two molecules of HSD17B8 and CBR4. As to expression, widely expressed, particularly abundant in prostate, placenta and kidney. Expressed at protein level in various tissues like brain, cerebellum, heart, lung, kidney, ovary, testis, adrenals and prostate.

Its subcellular location is the mitochondrion matrix. It carries out the reaction a (3R)-3-hydroxyacyl-CoA + NAD(+) = a 3-oxoacyl-CoA + NADH + H(+). It catalyses the reaction 17beta-estradiol + NAD(+) = estrone + NADH + H(+). The enzyme catalyses testosterone + NAD(+) = androst-4-ene-3,17-dione + NADH + H(+). The catalysed reaction is 17beta-hydroxy-5alpha-androstan-3-one + NAD(+) = 5alpha-androstan-3,17-dione + NADH + H(+). It functions in the pathway steroid biosynthesis; estrogen biosynthesis. Its pathway is lipid metabolism; fatty acid biosynthesis. It participates in lipid metabolism; mitochondrial fatty acid beta-oxidation. Its function is as follows. Required for the solubility and assembly of the heterotetramer 3-ketoacyl-[acyl carrier protein] (ACP) reductase functional complex (KAR or KAR1) that forms part of the mitochondrial fatty acid synthase (mtFAS). Alpha-subunit of the KAR complex that acts as a scaffold protein required for the stability of carbonyl reductase type-4 (CBR4, beta-subunit of the KAR complex) and for its 3-ketoacyl-ACP reductase activity, thereby participating in mitochondrial fatty acid biosynthesis. Catalyzes the NAD-dependent conversion of (3R)-3-hydroxyacyl-CoA into 3-ketoacyl-CoA (3-oxoacyl-CoA) with no chain length preference; this enzymatic activity is not needed for the KAR function. Prefers (3R)-3-hydroxyacyl-CoA over (3S)-3-hydroxyacyl-CoA and displays enzymatic activity only in the presence of NAD(+). Cooperates with enoyl-CoA hydratase 1 in mitochondria, together they constitute an alternative route to the auxiliary enzyme pathways for the breakdown of Z-PUFA (cis polyunsaturated fatty acid) enoyl-esters. NAD-dependent 17-beta-hydroxysteroid dehydrogenase with highest activity towards estradiol (17beta-estradiol or E2). Has very low activity towards testosterone and dihydrotestosterone (17beta-hydroxy-5alpha-androstan-3-one). Primarily an oxidative enzyme, it can switch to a reductive mode determined in the appropriate physiologic milieu and catalyze the reduction of estrone (E1) to form biologically active 17beta-estradiol. This chain is (3R)-3-hydroxyacyl-CoA dehydrogenase (HSD17B8), found in Homo sapiens (Human).